The following is a 104-amino-acid chain: uncharacterized protein (104 aa).

To A.aeolicus AQ_377.

This is an uncharacterized protein from Archaeoglobus fulgidus (strain ATCC 49558 / DSM 4304 / JCM 9628 / NBRC 100126 / VC-16).